We begin with the raw amino-acid sequence, 32 residues long: Variegin (32 aa).

The interval 1–32 (SDQGDVAEPKMHKTAPPFDFEAIPEEYLDDES) is disordered. The segment at 8–14 (EPKMHKT) is contains the active site. The O-linked (Hex) threonine glycan is linked to threonine 14. Over residues 22-32 (AIPEEYLDDES) the composition is skewed to acidic residues.

In terms of assembly, interacts with human F2 (thrombin); the interaction results in thrombin inhibition.

It localises to the secreted. Its function is as follows. Thrombin inhibitor. Does not inhibit other serine proteases. In Amblyomma variegatum (Tropical bont tick), this protein is Variegin.